A 245-amino-acid polypeptide reads, in one-letter code: Tryptophan synthase alpha chain (245 aa).

Residues Glu35 and Asp46 each act as proton acceptor in the active site.

Belongs to the TrpA family. As to quaternary structure, tetramer of two alpha and two beta chains.

It carries out the reaction (1S,2R)-1-C-(indol-3-yl)glycerol 3-phosphate + L-serine = D-glyceraldehyde 3-phosphate + L-tryptophan + H2O. Its pathway is amino-acid biosynthesis; L-tryptophan biosynthesis; L-tryptophan from chorismate: step 5/5. In terms of biological role, the alpha subunit is responsible for the aldol cleavage of indoleglycerol phosphate to indole and glyceraldehyde 3-phosphate. The polypeptide is Tryptophan synthase alpha chain (Sulfurisphaera tokodaii (strain DSM 16993 / JCM 10545 / NBRC 100140 / 7) (Sulfolobus tokodaii)).